The primary structure comprises 215 residues: CASP-like protein 1E1 (215 aa).

The Cytoplasmic portion of the chain corresponds to 1–51 (MESSRGKPGLNGSGGGAAAFDYSSRRGYYTGAGAALPPLAAGSRAPPVDPC). A helical transmembrane segment spans residues 52-72 (CVALRVFVLLGTLASAVVMAA). At 73-103 (DRQSTTVQIAAGEQLAPPLRVPVTAKWTYSS) the chain is on the extracellular side. Residues 104–124 (AFVYFVVANAMVFAFSAAALA) form a helical membrane-spanning segment. Over 125–130 (AVRRRS) the chain is Cytoplasmic. Residues 131–151 (AVVPVMVGDLVAMALLFSAVG) traverse the membrane as a helical segment. Topologically, residues 152–185 (AAAQFGLLGERGNAHVRWAKVCDVYGPFCERAMA) are extracellular. Residues 186-206 (AVVVALIAAFADLVLLMLTIL) form a helical membrane-spanning segment. The Cytoplasmic segment spans residues 207–215 (TIHKASSYY).

The protein belongs to the Casparian strip membrane proteins (CASP) family. Homodimer and heterodimers.

The protein localises to the cell membrane. The protein is CASP-like protein 1E1 of Oryza sativa subsp. indica (Rice).